Reading from the N-terminus, the 154-residue chain is Aspartate carbamoyltransferase regulatory chain (154 aa).

Zn(2+) is bound by residues C109, C114, C138, and C141.

Belongs to the PyrI family. In terms of assembly, contains catalytic and regulatory chains. Requires Zn(2+) as cofactor.

Functionally, involved in allosteric regulation of aspartate carbamoyltransferase. This is Aspartate carbamoyltransferase regulatory chain from Sodalis glossinidius (strain morsitans).